We begin with the raw amino-acid sequence, 479 residues long: MKKPEKITSRTANFAKWYVDVITQADLMNYGPIKGTIYFKPLGYKIWENIVKIVNAYFVKQKIENVYFPLLIPQDFIEKEKKHIEGFAPELLTITKVGGKNLVENIYIRPTSELLFADYFKAEIAKNNILPIKLNQWSQVLRWEKTTNPFLRNTEFLWQEGHTIHASKVEADQFAKKIARFYKYFLENYLAIPVISGQKTEREKFAGAVNTYTVEAMMQNFRALQSATAHFLGQNFAKNFEIFYKNKENKSQIPFQTSWGLSTRLIGAIVMVHSDDNGLIFPPKIAPIQVDILEFFSKKNQEVKIFAKKIAKILKNAKISYKIDDTDQQIGYKINNSEVHGAPIRIEIGPNEVKNNQICLVRRDNHQKFFFNIDLLKEKCRKILEQIQADLFKKAKIRLLENTVFVNSINEFEQAIKNNKFVIAPFSESPEREQEIQEKTGATARCILPKNSFFALPQTGNSIFSGEKTNKFVLFAKSY.

The protein belongs to the class-II aminoacyl-tRNA synthetase family. ProS type 3 subfamily. Homodimer.

It is found in the cytoplasm. It carries out the reaction tRNA(Pro) + L-proline + ATP = L-prolyl-tRNA(Pro) + AMP + diphosphate. In terms of biological role, catalyzes the attachment of proline to tRNA(Pro) in a two-step reaction: proline is first activated by ATP to form Pro-AMP and then transferred to the acceptor end of tRNA(Pro). In Mesomycoplasma hyopneumoniae (strain J / ATCC 25934 / NCTC 10110) (Mycoplasma hyopneumoniae), this protein is Proline--tRNA ligase.